Consider the following 165-residue polypeptide: SsrA-binding protein (165 aa).

The interval 141–165 (KLHDKRENEKRKQSEREVKSALARY) is disordered. Basic and acidic residues predominate over residues 144 to 159 (DKRENEKRKQSEREVK).

Belongs to the SmpB family.

The protein resides in the cytoplasm. Its function is as follows. Required for rescue of stalled ribosomes mediated by trans-translation. Binds to transfer-messenger RNA (tmRNA), required for stable association of tmRNA with ribosomes. tmRNA and SmpB together mimic tRNA shape, replacing the anticodon stem-loop with SmpB. tmRNA is encoded by the ssrA gene; the 2 termini fold to resemble tRNA(Ala) and it encodes a 'tag peptide', a short internal open reading frame. During trans-translation Ala-aminoacylated tmRNA acts like a tRNA, entering the A-site of stalled ribosomes, displacing the stalled mRNA. The ribosome then switches to translate the ORF on the tmRNA; the nascent peptide is terminated with the 'tag peptide' encoded by the tmRNA and targeted for degradation. The ribosome is freed to recommence translation, which seems to be the essential function of trans-translation. This is SsrA-binding protein from Prochlorococcus marinus (strain SARG / CCMP1375 / SS120).